The sequence spans 512 residues: Histidine ammonia-lyase (512 aa).

The 5-imidazolinone (Ala-Gly) cross-link spans 144–146 (ASG). Ser145 carries the post-translational modification 2,3-didehydroalanine (Ser).

Belongs to the PAL/histidase family. In terms of processing, contains an active site 4-methylidene-imidazol-5-one (MIO), which is formed autocatalytically by cyclization and dehydration of residues Ala-Ser-Gly.

It is found in the cytoplasm. It catalyses the reaction L-histidine = trans-urocanate + NH4(+). It participates in amino-acid degradation; L-histidine degradation into L-glutamate; N-formimidoyl-L-glutamate from L-histidine: step 1/3. This is Histidine ammonia-lyase from Desulfotalea psychrophila (strain LSv54 / DSM 12343).